Reading from the N-terminus, the 467-residue chain is Serine/threonine-protein kinase US3 homolog (467 aa).

Positions 64–155 (GPEVAPPART…PAGGVTREEA (92 aa)) are disordered. Over residues 99 to 111 (NERRAATGDEKES) the composition is skewed to basic and acidic residues. The span at 117–144 (NESESESESESESESGADDGDWDDDDDA) shows a compositional bias: acidic residues. The region spanning 164 to 462 (FRIIRRLTPG…AAELLEHPVF (299 aa)) is the Protein kinase domain. ATP contacts are provided by residues 170–178 (LTPGSEGRV) and lysine 194. Catalysis depends on aspartate 279, which acts as the Proton acceptor.

Belongs to the protein kinase superfamily. Ser/Thr protein kinase family. In terms of processing, phosphorylated by UL13 homolog; this phosphorylation regulates subsequent phosphorylation of UL31 and UL34 homologs by US3. Autophosphorylated.

It localises to the host cytoplasm. The protein localises to the host nucleus. The catalysed reaction is L-seryl-[protein] + ATP = O-phospho-L-seryl-[protein] + ADP + H(+). It catalyses the reaction L-threonyl-[protein] + ATP = O-phospho-L-threonyl-[protein] + ADP + H(+). In terms of biological role, multifunctional serine/threonine kinase that plays a role in several processes including egress of virus particles from the nucleus, modulation of the actin cytoskeleton and inhibition of apoptosis. Phosphorylates UL31 and UL34 homologs, two critical regulators of capsid budding from nucleus to endoplasmic reticulum, thereby facilitating virion egress. Modulates and redistributes host components of the nuclear envelope, including LMNA, emerin/EMD and the nuclear matrix protein MATR3. Phosphorylates envelope glycoprotein B (gB), probably to direct it to the cell surface. Promotes virus intracellular spread by restructuring host cell cytoskeleton. Blocks host apoptosis to extend cell survival and allow efficient viral replication. Promotes viral gene expression by phosphorylating host HDAC2 to reduce viral genome silencing. This is Serine/threonine-protein kinase US3 homolog from Bos taurus (Bovine).